A 629-amino-acid polypeptide reads, in one-letter code: tRNA uridine 5-carboxymethylaminomethyl modification enzyme MnmG (629 aa).

FAD contacts are provided by residues 13 to 18 (GGGHAG), V125, and S180. 273–287 (GPRYCPSIEDKVMRF) is an NAD(+) binding site. Q370 is an FAD binding site.

This sequence belongs to the MnmG family. As to quaternary structure, homodimer. Heterotetramer of two MnmE and two MnmG subunits. FAD is required as a cofactor.

It localises to the cytoplasm. NAD-binding protein involved in the addition of a carboxymethylaminomethyl (cmnm) group at the wobble position (U34) of certain tRNAs, forming tRNA-cmnm(5)s(2)U34. This is tRNA uridine 5-carboxymethylaminomethyl modification enzyme MnmG from Salmonella dublin (strain CT_02021853).